The following is a 205-amino-acid chain: Transcriptional regulatory protein PdtaR (205 aa).

The region spanning 15 to 129 (RVLIAEDEAL…DLIPAIELAV (115 aa)) is the Response regulatory domain. Residue Asp-65 is modified to 4-aspartylphosphate. Positions 135-196 (ITALEGEVAT…TMKRVAEVVL (62 aa)) constitute an ANTAR domain.

Post-translationally, phosphorylated and activated by PdtaS.

Its subcellular location is the cytoplasm. Member of the two-component regulatory system PdtaR/PdtaS. This two-component system plays an essential role in mycobacterial adaptation to poor nutrient conditions. PdtaR probably acts at the level of transcriptional antitermination rather than transcriptional initiation. Its function is as follows. In addition, the PdtaR/PdtaS two-component system controls copper and nitric oxide (NO) resistance downstream of the intramembrane protease Rip1. This coupled Rip1/PdtaS/PdtaR circuit controls NO resistance and acute lung infection in mice by relieving PdtaR/PdtaS-mediated repression of isonitrile chalkophore biosynthesis. Two signals are required to fully inactivate the PdtaR/PdtaS system and mediate NO resistance: a cytoplasmic inhibitory signal through the PdtaS kinase mediated by direct sensing of NO and the production of PPE1-5', an NO-induced small RNA, to sequester PdtaR. The sequence is that of Transcriptional regulatory protein PdtaR (pdtaR) from Mycobacterium tuberculosis (strain CDC 1551 / Oshkosh).